A 249-amino-acid polypeptide reads, in one-letter code: FMN reductase (NADPH) (249 aa).

Belongs to the flavin oxidoreductase frp family. Homodimer.

It catalyses the reaction FMNH2 + NADP(+) = FMN + NADPH + 2 H(+). In terms of biological role, reduces FMNH(2) to FMN, with NADPH as reductant. It also reduces nitroaromatic compounds, quinones and azo dyes. This Bacillus subtilis (strain 168) protein is FMN reductase (NADPH) (nfrA1).